We begin with the raw amino-acid sequence, 358 residues long: sn-glycerol-3-phosphate import ATP-binding protein UgpC (358 aa).

The ABC transporter domain occupies 4-235 (VELKQVRKTY…PATLFVASFI (232 aa)). Position 37–44 (37–44 (GPSGCGKS)) interacts with ATP.

It belongs to the ABC transporter superfamily. sn-glycerol-3-phosphate importer (TC 3.A.1.1.3) family. The complex is composed of two ATP-binding proteins (UgpC), two transmembrane proteins (UgpA and UgpE) and a solute-binding protein (UgpB).

It localises to the cell inner membrane. The enzyme catalyses sn-glycerol 3-phosphate(out) + ATP + H2O = sn-glycerol 3-phosphate(in) + ADP + phosphate + H(+). Part of the ABC transporter complex UgpBAEC involved in sn-glycerol-3-phosphate (G3P) import. Responsible for energy coupling to the transport system. The sequence is that of sn-glycerol-3-phosphate import ATP-binding protein UgpC from Roseobacter denitrificans (strain ATCC 33942 / OCh 114) (Erythrobacter sp. (strain OCh 114)).